The following is a 982-amino-acid chain: Bifunctional glutamine synthetase adenylyltransferase/adenylyl-removing enzyme (982 aa).

The segment at methionine 1–aspartate 460 is adenylyl removase. Residues glycine 473–glycine 982 are adenylyl transferase.

Belongs to the GlnE family. Requires Mg(2+) as cofactor.

The enzyme catalyses [glutamine synthetase]-O(4)-(5'-adenylyl)-L-tyrosine + phosphate = [glutamine synthetase]-L-tyrosine + ADP. It catalyses the reaction [glutamine synthetase]-L-tyrosine + ATP = [glutamine synthetase]-O(4)-(5'-adenylyl)-L-tyrosine + diphosphate. Functionally, involved in the regulation of glutamine synthetase GlnA, a key enzyme in the process to assimilate ammonia. When cellular nitrogen levels are high, the C-terminal adenylyl transferase (AT) inactivates GlnA by covalent transfer of an adenylyl group from ATP to specific tyrosine residue of GlnA, thus reducing its activity. Conversely, when nitrogen levels are low, the N-terminal adenylyl removase (AR) activates GlnA by removing the adenylyl group by phosphorolysis, increasing its activity. The regulatory region of GlnE binds the signal transduction protein PII (GlnB) which indicates the nitrogen status of the cell. The chain is Bifunctional glutamine synthetase adenylyltransferase/adenylyl-removing enzyme from Pseudomonas aeruginosa (strain ATCC 15692 / DSM 22644 / CIP 104116 / JCM 14847 / LMG 12228 / 1C / PRS 101 / PAO1).